A 95-amino-acid polypeptide reads, in one-letter code: Glutamyl-tRNA(Gln) amidotransferase subunit C 1 (95 aa).

Belongs to the GatC family. Heterotrimer of A, B and C subunits.

The catalysed reaction is L-glutamyl-tRNA(Gln) + L-glutamine + ATP + H2O = L-glutaminyl-tRNA(Gln) + L-glutamate + ADP + phosphate + H(+). It carries out the reaction L-aspartyl-tRNA(Asn) + L-glutamine + ATP + H2O = L-asparaginyl-tRNA(Asn) + L-glutamate + ADP + phosphate + 2 H(+). In terms of biological role, allows the formation of correctly charged Asn-tRNA(Asn) or Gln-tRNA(Gln) through the transamidation of misacylated Asp-tRNA(Asn) or Glu-tRNA(Gln) in organisms which lack either or both of asparaginyl-tRNA or glutaminyl-tRNA synthetases. The reaction takes place in the presence of glutamine and ATP through an activated phospho-Asp-tRNA(Asn) or phospho-Glu-tRNA(Gln). The sequence is that of Glutamyl-tRNA(Gln) amidotransferase subunit C 1 (gatC1) from Clostridium acetobutylicum (strain ATCC 824 / DSM 792 / JCM 1419 / IAM 19013 / LMG 5710 / NBRC 13948 / NRRL B-527 / VKM B-1787 / 2291 / W).